Consider the following 268-residue polypeptide: Interleukin-1 alpha (268 aa).

A propeptide spanning residues 1–112 (MAKVPDLFED…DTEEEIIKPR (112 aa)) is cleaved from the precursor. Lys82 is modified (N6-acetyllysine). Positions 82–86 (KKRRL) are nuclear localization signal (NLS). Phosphoserine is present on Ser87. N-linked (GlcNAc...) asparagine glycosylation is found at Asn102 and Asn141.

This sequence belongs to the IL-1 family. As to quaternary structure, monomer. Interacts with TMED10; the interaction mediates the translocation from the cytoplasm into the ERGIC (endoplasmic reticulum-Golgi intermediate compartment) and thereby secretion. Interacts with IL1R1. Interacts with S100A13; this interaction is the first step in the export of IL1A, followed by direct translocation of this complex across the plasma membrane. Acetylated within its nuclear localization sequence, which impacts subcellular localization. Post-translationally, proteolytic processed by CAPN1 in a calcium-dependent manner. Cleavage from 31 kDa precursor to 18 kDa biologically active molecules. In terms of processing, phosphorylated. Phosphorylation greatly enhances susceptibility to digestion and promotes the conversion of pre-IL1A alpha to the biologically active IL1A.

It is found in the nucleus. The protein localises to the cytoplasm. The protein resides in the secreted. Its function is as follows. Cytokine constitutively present intracellularly in nearly all resting non-hematopoietic cells that plays an important role in inflammation and bridges the innate and adaptive immune systems. After binding to its receptor IL1R1 together with its accessory protein IL1RAP, forms the high affinity interleukin-1 receptor complex. Signaling involves the recruitment of adapter molecules such as MYD88, IRAK1 or IRAK4. In turn, mediates the activation of NF-kappa-B and the three MAPK pathways p38, p42/p44 and JNK pathways. Within the cell, acts as an alarmin and cell death results in its liberation in the extracellular space after disruption of the cell membrane to induce inflammation and alert the host to injury or damage. In addition to its role as a danger signal, which occurs when the cytokine is passively released by cell necrosis, directly senses DNA damage and acts as signal for genotoxic stress without loss of cell integrity. The chain is Interleukin-1 alpha (IL1A) from Capra hircus (Goat).